The primary structure comprises 430 residues: Enolase (430 aa).

Q168 lines the (2R)-2-phosphoglycerate pocket. E210 functions as the Proton donor in the catalytic mechanism. D247, E288, and D315 together coordinate Mg(2+). Residues K340, R369, S370, and K391 each coordinate (2R)-2-phosphoglycerate. Residue K340 is the Proton acceptor of the active site.

Belongs to the enolase family. Requires Mg(2+) as cofactor.

It is found in the cytoplasm. Its subcellular location is the secreted. It localises to the cell surface. It catalyses the reaction (2R)-2-phosphoglycerate = phosphoenolpyruvate + H2O. The protein operates within carbohydrate degradation; glycolysis; pyruvate from D-glyceraldehyde 3-phosphate: step 4/5. Its function is as follows. Catalyzes the reversible conversion of 2-phosphoglycerate (2-PG) into phosphoenolpyruvate (PEP). It is essential for the degradation of carbohydrates via glycolysis. The polypeptide is Enolase (Picosynechococcus sp. (strain ATCC 27264 / PCC 7002 / PR-6) (Agmenellum quadruplicatum)).